A 1400-amino-acid chain; its full sequence is DNA-directed RNA polymerase subunit beta' (1400 aa).

Residues Cys-71, Cys-73, Cys-86, and Cys-89 each contribute to the Zn(2+) site. Mg(2+) contacts are provided by Asp-462, Asp-464, and Asp-466. 4 residues coordinate Zn(2+): Cys-820, Cys-893, Cys-900, and Cys-903.

The protein belongs to the RNA polymerase beta' chain family. As to quaternary structure, the RNAP catalytic core consists of 2 alpha, 1 beta, 1 beta' and 1 omega subunit. When a sigma factor is associated with the core the holoenzyme is formed, which can initiate transcription. Requires Mg(2+) as cofactor. The cofactor is Zn(2+).

It carries out the reaction RNA(n) + a ribonucleoside 5'-triphosphate = RNA(n+1) + diphosphate. Functionally, DNA-dependent RNA polymerase catalyzes the transcription of DNA into RNA using the four ribonucleoside triphosphates as substrates. The sequence is that of DNA-directed RNA polymerase subunit beta' from Methylobacterium nodulans (strain LMG 21967 / CNCM I-2342 / ORS 2060).